Reading from the N-terminus, the 1032-residue chain is Kinesin heavy chain isoform 5A (1032 aa).

A2 carries the N-acetylalanine modification. Residues S9–I327 enclose the Kinesin motor domain. Residue G86–T93 coordinates ATP. The segment at V174–K315 is microtubule-binding. Positions E271–A361 are necessary for interaction with ZFYVE27. A coiled-coil region spans residues A331 to Y906. The tract at residues T353–S1032 is interaction with BICD2. T397 is modified (phosphothreonine). Disordered stretches follow at residues Y906 to R939 and S978 to L1010. Residues K907–S1032 form a globular region. Residues S978–S989 show a composition bias toward low complexity. A compositionally biased stretch (polar residues) spans Q991–I1003.

Belongs to the TRAFAC class myosin-kinesin ATPase superfamily. Kinesin family. Kinesin subfamily. As to quaternary structure, oligomer composed of two heavy chains and two light chains. Interacts with GRIP1. Interacts with FMR1 (via C-terminus); this interaction is increased in a mGluR-dependent manner. Interacts with ZFYVE27. Interacts with VAPA, VAPB, SURF4, RAB11A (GDP-bound form), RAB11B (GDP-bound form) and RTN3 in a ZFYVE27-dependent manner. Interacts with BORCS5. Interacts with BICD2. Interacts with DTNB. As to expression, distributed throughout the CNS but is highly enriched in subsets of neurons.

It localises to the cytoplasm. The protein resides in the perinuclear region. The protein localises to the cytoskeleton. Its subcellular location is the perikaryon. It carries out the reaction ATP + H2O + a kinesin associated with a microtubule at position (n) = ADP + phosphate a kinesin associated with a microtubule at position (n+1, toward the plus end).. Functionally, microtubule-dependent motor required for slow axonal transport of neurofilament proteins (NFH, NFM and NFL). Can induce formation of neurite-like membrane protrusions in non-neuronal cells in a ZFYVE27-dependent manner. The ZFYVE27-KIF5A complex contributes to the vesicular transport of VAPA, VAPB, SURF4, RAB11A, RAB11B and RTN3 proteins in neurons. Required for anterograde axonal transportation of MAPK8IP3/JIP3 which is essential for MAPK8IP3/JIP3 function in axon elongation. The sequence is that of Kinesin heavy chain isoform 5A from Homo sapiens (Human).